The following is a 40-amino-acid chain: Alpha-conotoxin-like Qc1.1c (40 aa).

A propeptide spanning residues 1-19 is cleaved from the precursor; sequence SDGRNTAANDKASNLMALR. 2 disulfides stabilise this stretch: cysteine 22/cysteine 28 and cysteine 23/cysteine 36. Positions 24–26 are lacks the Ser-Xaa-Pro motif that is crucial for potent interaction with nAChR; the sequence is PNP.

Belongs to the conotoxin A superfamily. In terms of tissue distribution, expressed by the venom duct.

Its subcellular location is the secreted. Functionally, alpha-conotoxins act on postsynaptic membranes, they bind to the nicotinic acetylcholine receptors (nAChR) and thus inhibit them. Has possibly a distinct nAChR binding mode from other alpha-conotoxins, due to a different three residue motif (lacks the Ser-Xaa-Pro motif). In Conus quercinus (Oak cone), this protein is Alpha-conotoxin-like Qc1.1c.